The sequence spans 269 residues: MPAAVPSWDPSQYLRHADHRARPFADLLARVPELPRDPARIADLGCGPGNVTRLIAERWPTARITGLDNSPEMLAKAAAYAGPTAGGGRLDFAAADARTWTPAQPYDLIVSNATLQWVPGHIDRLPAWTDGLAPGGTLAFQVPGNFDSPSHRLMRELAHSARWKDRLADTLRHDDAVHTPAAYLEALTALGCAADVWETTYLHLLQGEDPVLDWVKGTGLRPVLTELGAADAEAFVAEYREALREAYPATERGTVFPFRRVFAVAHKEA.

It belongs to the methyltransferase superfamily. Tam family.

Its subcellular location is the cytoplasm. The enzyme catalyses trans-aconitate + S-adenosyl-L-methionine = (E)-3-(methoxycarbonyl)pent-2-enedioate + S-adenosyl-L-homocysteine. Catalyzes the S-adenosylmethionine monomethyl esterification of trans-aconitate. The polypeptide is Trans-aconitate 2-methyltransferase (Streptomyces avermitilis (strain ATCC 31267 / DSM 46492 / JCM 5070 / NBRC 14893 / NCIMB 12804 / NRRL 8165 / MA-4680)).